Reading from the N-terminus, the 642-residue chain is Fimbrin (642 aa).

EF-hand domains follow at residues 16–50 and 51–86; these read EDLFSTIEKFRAIDLDDKGWVEKQQALEAVSKDGD and ATYDEARETLKHVGVDASGRVELDDYVGLVAKLRES. Residues Asp-29, Asp-31, Trp-35, Asp-66, Ser-68, Arg-70, and Asp-75 each coordinate Ca(2+). Actin-binding stretches follow at residues 125-394 and 395-642; these read IVAG…GLEP and IQEE…TLNK. 4 consecutive Calponin-homology (CH) domains span residues 139–259, 287–390, 411–521, and 534–642; these read EEER…RRGL, LPPE…NTHP, EREA…RRNI, and DMSD…TLNK.

In terms of biological role, binds to actin, and functionally associates with actin structures involved in the development and maintenance of cell polarity. The sequence is that of Fimbrin (SAC6) from Saccharomyces cerevisiae (strain ATCC 204508 / S288c) (Baker's yeast).